A 69-amino-acid chain; its full sequence is Small integral membrane protein 20 (69 aa).

The Mitochondrial matrix portion of the chain corresponds to 1–8 (MAAARNLR). A helical transmembrane segment spans residues 9-29 (TALIFGGFISMVGAAFYPIYF). The Mitochondrial intermembrane portion of the chain corresponds to 30–69 (RPLLRLEEYQKEQAVNRAGIVQEDVQPPGLKVWSDPFGRK). Position 66 is a phenylalanine amide (Phe-66).

In terms of assembly, component of the MITRAC (mitochondrial translation regulation assembly intermediate of cytochrome c oxidase complex) complex, the core components of this complex being Coa3/Mitrac12 and Cox14. Interacts with Coa3/Mitrac12 and Cox4i1. Directly interacts with newly synthesized Mt-Co1/Cox1. Highly expressed in the hypothalamus, substantia nigra reticulata, Edinger-Westphal nucleus, and nucleus of the solitary tract/dorsal motor nucleus of the vagus, the spinal cord, and sensory ganglia (at protein level). Also expressed in the heart, thymus, esophagus, stomach, spleen, lung, pituitary gland, kidney, jejunum, duodenum, ileum, cerebrum, pons, and colon (at protein level). Expressed in preadipocytes and apidocytes (at protein level). Expressed in pancreatic islet cells (at protein level).

Its subcellular location is the mitochondrion inner membrane. The protein resides in the secreted. Component of the MITRAC (mitochondrial translation regulation assembly intermediate of cytochrome c oxidase complex) complex, that regulates cytochrome c oxidase assembly. Promotes the progression of complex assembly after the association of Mt-Co1/Cox11 with Cox4I1 and Cox6c. Chaperone-like assembly factor required to stabilize newly synthesized Mt-Co1/Cox1 and to prevent its premature turnover. Functionally, peptide involved in a broad spectrum of regulatory functions. Is a ligand for GPR173. As part of the reproductive cycle, it regulates gonadotropin-releasing hormone (GnRH) signaling in the hypothalamus and pituitary gland which augments the release of luteinizing hormone. More specifically, it regulates the expression of transcription factors CEBPB and POU2F1/OCT1 through the cAMP-PKA signaling pathway, which subsequently regulate the expression of GNRHR and KISS1. Plays a protective role in memory retention through activation of GNRHR. Regulates the secretion of AVP by hypothalamic neurons. Plays a role in the transduction of the itch sensation. Induces anxiolytic effects, reducing behavior associated with anxiety. Regulates food intake as well as satiation and satiety by increasing NUCB2 expression in neurons. In the ovary, it regulates follicular growth by stimulating granulosa cell proliferation by increasing the expression of GPR173, CREB1, CYP19A1, KITLG, FSHR, and LHCGR. It also increases the production of estradiol (E2). In the heart, it regulates contractility and relaxation by activating the AKT1-NOS3 and MAPK1-MAPK3 signaling pathways. It also plays a cardioprotective role during ischemia, where it activates the SAFE and RISK pathways. Stimulates the proliferation and differentiation of preadipocytes. In pancreatic islet cells, it induces proliferation of islet cells as well as the production of INS1 and INS2 through activation of the MAPK1-MAPK3 signaling pathways. This chain is Small integral membrane protein 20, found in Rattus norvegicus (Rat).